Reading from the N-terminus, the 213-residue chain is Guanylate kinase (213 aa).

Residues 10–189 form the Guanylate kinase-like domain; the sequence is GLLLMVVAPS…AYADLAHIYH (180 aa). 17-24 contributes to the ATP binding site; it reads APSGVGKT.

It belongs to the guanylate kinase family.

Its subcellular location is the cytoplasm. It carries out the reaction GMP + ATP = GDP + ADP. Functionally, essential for recycling GMP and indirectly, cGMP. The polypeptide is Guanylate kinase (gmk) (Caulobacter vibrioides (strain ATCC 19089 / CIP 103742 / CB 15) (Caulobacter crescentus)).